The primary structure comprises 261 residues: Carbonic anhydrase 1 (261 aa).

A2 is modified (N-acetylalanine). The Alpha-carbonic anhydrase domain occupies 4–261 (PDWGYDDKNG…LKGRTVRASF (258 aa)). H65 serves as the catalytic Proton donor/acceptor. H95, H97, and H120 together coordinate Zn(2+). Residues T200 and 200-201 (TH) each bind substrate. The segment at 235 to 261 (EGDNPVPSQRNNRPTQPLKGRTVRASF) is disordered. Positions 240 to 249 (VPSQRNNRPT) are enriched in polar residues.

Belongs to the alpha-carbonic anhydrase family. The cofactor is Zn(2+).

The protein resides in the cytoplasm. The catalysed reaction is hydrogencarbonate + H(+) = CO2 + H2O. The enzyme catalyses urea = cyanamide + H2O. With respect to regulation, inhibited by acetazolamide. Catalyzes the reversible hydration of carbon dioxide. Can hydrate cyanamide to urea. This Macaca nemestrina (Pig-tailed macaque) protein is Carbonic anhydrase 1 (CA1).